The sequence spans 245 residues: Ribonuclease PH (245 aa).

Phosphate-binding positions include Arg86 and 124–126 (GTR).

This sequence belongs to the RNase PH family. In terms of assembly, homohexameric ring arranged as a trimer of dimers.

It catalyses the reaction tRNA(n+1) + phosphate = tRNA(n) + a ribonucleoside 5'-diphosphate. Its function is as follows. Phosphorolytic 3'-5' exoribonuclease that plays an important role in tRNA 3'-end maturation. Removes nucleotide residues following the 3'-CCA terminus of tRNAs; can also add nucleotides to the ends of RNA molecules by using nucleoside diphosphates as substrates, but this may not be physiologically important. Probably plays a role in initiation of 16S rRNA degradation (leading to ribosome degradation) during starvation. The polypeptide is Ribonuclease PH (Bacillus cereus (strain G9842)).